Here is a 421-residue protein sequence, read N- to C-terminus: Phosphoribosylamine--glycine ligase (421 aa).

In terms of domain architecture, ATP-grasp spans 108–314; it reads KEIMVKYNVP…FAQNIDDIMM (207 aa). 134 to 195 is an ATP binding site; it reads IEEQGAPIVV…EEFLDGEEFS (62 aa). E284 and N286 together coordinate Mg(2+).

It belongs to the GARS family. Mg(2+) serves as cofactor. Requires Mn(2+) as cofactor.

It catalyses the reaction 5-phospho-beta-D-ribosylamine + glycine + ATP = N(1)-(5-phospho-beta-D-ribosyl)glycinamide + ADP + phosphate + H(+). The protein operates within purine metabolism; IMP biosynthesis via de novo pathway; N(1)-(5-phospho-D-ribosyl)glycinamide from 5-phospho-alpha-D-ribose 1-diphosphate: step 2/2. The protein is Phosphoribosylamine--glycine ligase of Streptococcus pyogenes serotype M3 (strain SSI-1).